We begin with the raw amino-acid sequence, 167 residues long: Phospholipase A and acyltransferase 1 (167 aa).

Topologically, residues 1 to 138 (MAVNDCFSLT…GEGVSEQANR (138 aa)) are cytoplasmic. An LRAT domain is found at 20–135 (LIEVFRPCYQ…LRYGEGVSEQ (116 aa)). The active site involves His30. Residue Cys119 is the Acyl-thioester intermediate of the active site. The helical transmembrane segment at 139 to 159 (AIGTIGLVAAGIDIFTFLGLF) threads the bilayer. Over 160-167 (PKRQRTKY) the chain is Lumenal.

This sequence belongs to the H-rev107 family. In terms of tissue distribution, expressed in skeletal muscle, heart, brain, bone marrow and testis. As to expression, abundantly expressed in brain, heart, and skeletal muscle.

It localises to the membrane. It is found in the cytoplasm. Its subcellular location is the nucleus. The catalysed reaction is a 1,2-diacyl-sn-glycero-3-phosphocholine + H2O = a 1-acyl-sn-glycero-3-phosphocholine + a fatty acid + H(+). The enzyme catalyses a 1,2-diacyl-sn-glycero-3-phosphocholine + H2O = a 2-acyl-sn-glycero-3-phosphocholine + a fatty acid + H(+). It catalyses the reaction 1,2-dihexadecanoyl-sn-glycero-3-phosphocholine + H2O = 2-hexadecanoyl-sn-glycero-3-phosphocholine + hexadecanoate + H(+). It carries out the reaction 1,2-dihexadecanoyl-sn-glycero-3-phosphocholine + H2O = 1-hexadecanoyl-sn-glycero-3-phosphocholine + hexadecanoate + H(+). The catalysed reaction is 1-hexadecanoyl-2-(5Z,8Z,11Z,14Z-eicosatetraenoyl)-sn-glycero-3-phosphoethanolamine + H2O = 2-(5Z,8Z,11Z,14Z)-eicosatetraenoyl-sn-glycero-3-phosphoethanolamine + hexadecanoate + H(+). The enzyme catalyses 1-hexadecanoyl-2-(5Z,8Z,11Z,14Z-eicosatetraenoyl)-sn-glycero-3-phosphoethanolamine + H2O = 1-hexadecanoyl-sn-glycero-3-phosphoethanolamine + (5Z,8Z,11Z,14Z)-eicosatetraenoate + H(+). It catalyses the reaction 1,2-di-(9Z-octadecenoyl)-sn-glycero-3-phosphoethanolamine + 1,2-dihexadecanoyl-sn-glycero-3-phosphocholine = hexadecanoyl-sn-glycero-3-phosphocholine + N-hexadecanoyl-1,2-di-(9Z-octadecenoyl)-sn-glycero-3-phosphoethanolamine + H(+). It carries out the reaction 1,2-dihexadecanoyl-sn-glycero-3-phosphocholine + a 2-acyl-sn-glycero-3-phosphocholine = a 1-hexadecanoyl-2-acyl-sn-glycero-3-phosphocholine + 2-hexadecanoyl-sn-glycero-3-phosphocholine. In terms of biological role, exhibits both phospholipase A1/2 and acyltransferase activities. Shows phospholipase A1 (PLA1) and A2 (PLA2) activity, catalyzing the calcium-independent release of fatty acids from the sn-1 or sn-2 position of glycerophospholipids. Shows O-acyltransferase activity, catalyzing the transfer of a fatty acyl group from glycerophospholipid to the hydroxyl group of lysophospholipid. Shows N-acyltransferase activity, catalyzing the calcium-independent transfer of a fatty acyl group at the sn-1 position of phosphatidylcholine (PC) and other glycerophospholipids to the primary amine of phosphatidylethanolamine (PE), forming N-acylphosphatidylethanolamine (NAPE), which serves as precursor for N-acylethanolamines (NAEs). This is Phospholipase A and acyltransferase 1 from Mus musculus (Mouse).